The sequence spans 491 residues: Glycogen synthase 1 (491 aa).

ADP-alpha-D-glucose is bound at residue Lys-15.

This sequence belongs to the glycosyltransferase 1 family. Bacterial/plant glycogen synthase subfamily.

The catalysed reaction is [(1-&gt;4)-alpha-D-glucosyl](n) + ADP-alpha-D-glucose = [(1-&gt;4)-alpha-D-glucosyl](n+1) + ADP + H(+). It functions in the pathway glycan biosynthesis; glycogen biosynthesis. Functionally, synthesizes alpha-1,4-glucan chains using ADP-glucose. This Synechococcus sp. (strain JA-3-3Ab) (Cyanobacteria bacterium Yellowstone A-Prime) protein is Glycogen synthase 1.